The primary structure comprises 626 residues: ATP-dependent zinc metalloprotease FtsH (626 aa).

The Cytoplasmic segment spans residues 1-5 (MNFRN). The chain crosses the membrane as a helical span at residues 6–26 (LAIWLVIVAVLGGVFVVSQNS). The Periplasmic portion of the chain corresponds to 27–98 (RTKSSSEISY…DVKFKSGSIS (72 aa)). A helical transmembrane segment spans residues 99-119 (FLAILVQLLPILLVVGVWLFL). Topologically, residues 120-626 (MRQMQGGAKG…SPGAGASVTA (507 aa)) are cytoplasmic. 191–198 (GPPGTGKT) provides a ligand contact to ATP. Residue His-413 participates in Zn(2+) binding. Residue Glu-414 is part of the active site. The Zn(2+) site is built by His-417 and Asp-491.

This sequence in the central section; belongs to the AAA ATPase family. The protein in the C-terminal section; belongs to the peptidase M41 family. In terms of assembly, homohexamer. It depends on Zn(2+) as a cofactor.

It is found in the cell inner membrane. In terms of biological role, acts as a processive, ATP-dependent zinc metallopeptidase for both cytoplasmic and membrane proteins. Plays a role in the quality control of integral membrane proteins. Functionally, absence of FtsH leads to increased sigma-32 levels, which suggests, in analogy to E.coli, that sigma-32 is a substrate for FtsH. May play a role in the general stress response, as overexpression leads to improved resistance to salt stress. The protein is ATP-dependent zinc metalloprotease FtsH of Caulobacter vibrioides (strain NA1000 / CB15N) (Caulobacter crescentus).